Consider the following 513-residue polypeptide: Putative ATP-dependent RNA helicase QP509L (513 aa).

Residues 110–262 enclose the Helicase ATP-binding domain; that stretch reads KKLLSPYGRF…KIIIHHLGQP (153 aa). Residue 123–130 participates in ATP binding; sequence LNTGLGKT. Positions 215–218 match the DEAH box motif; it reads DEAH.

Belongs to the DEAD box helicase family. DEAH subfamily.

It catalyses the reaction ATP + H2O = ADP + phosphate + H(+). The chain is Putative ATP-dependent RNA helicase QP509L from Ornithodoros (relapsing fever ticks).